Consider the following 185-residue polypeptide: UPF0200 protein TON_1344 (185 aa).

Residue 7–14 (GMPGSGKS) participates in ATP binding.

The protein belongs to the UPF0200 family.

This chain is UPF0200 protein TON_1344, found in Thermococcus onnurineus (strain NA1).